Reading from the N-terminus, the 220-residue chain is Probable acrEF/envCD operon repressor (220 aa).

The region spanning 10 to 70 is the HTH tetR-type domain; the sequence is LKTRQELIET…EMWLQQPSLR (61 aa). Residues 33-52 constitute a DNA-binding region (H-T-H motif); that stretch reads TLNDIADAANVTRGAIYWHF.

Functionally, potential regulator protein for the acrEF/envCD genes. The sequence is that of Probable acrEF/envCD operon repressor (envR) from Escherichia coli O157:H7.